The primary structure comprises 486 residues: Serine/threonine-protein phosphatase 2A 56 kDa regulatory subunit alpha isoform (486 aa).

Ser-2 bears the N-acetylserine mark. Positions Asp-22–Glu-52 are disordered. Positions Lys-27–Arg-37 are enriched in basic residues. Over residues Ser-38–Ala-51 the composition is skewed to low complexity. 3 positions are modified to phosphoserine: Ser-41, Ser-42, and Ser-49.

The protein belongs to the phosphatase 2A regulatory subunit B56 family. PP2A consists of a common heterodimeric core enzyme, composed of a 36 kDa catalytic subunit (subunit C) and a 65 kDa constant regulatory subunit (PR65 or subunit A), that associates with a variety of regulatory subunits. Proteins that associate with the core dimer include three families of regulatory subunits B (the R2/B/PR55/B55, R3/B''/PR72/PR130/PR59 and R5/B'/B56 families), the 48 kDa variable regulatory subunit, viral proteins, and cell signaling molecules. Interacts with SGO1. As to expression, widely expressed with highest levels in thymus and ovary.

The protein resides in the cytoplasm. It is found in the nucleus. It localises to the chromosome. Its subcellular location is the centromere. In terms of biological role, the B regulatory subunit might modulate substrate selectivity and catalytic activity, and might also direct the localization of the catalytic enzyme to a particular subcellular compartment. The polypeptide is Serine/threonine-protein phosphatase 2A 56 kDa regulatory subunit alpha isoform (Ppp2r5a) (Mus musculus (Mouse)).